The primary structure comprises 476 residues: Glutathione synthetase (476 aa).

Arg-117 lines the substrate pocket. An ATP-binding site is contributed by Glu-137. Mg(2+)-binding residues include Glu-137 and Asn-139. Residues Ile-141–Ser-144, Glu-211–Asn-213, Gln-217, and Arg-267–Tyr-270 each bind substrate. Residues Lys-308, Lys-367–Asn-376, Tyr-378, Met-400–Ile-403, and Glu-426 contribute to the ATP site. Glu-371 is a Mg(2+) binding site. Arg-452 serves as a coordination point for substrate. Residues Lys-454 and Glu-460 each contribute to the ATP site. Substrate is bound at residue Val-463–Ala-464.

It belongs to the eukaryotic GSH synthase family. Homodimer. Requires Mg(2+) as cofactor.

The catalysed reaction is gamma-L-glutamyl-L-cysteine + glycine + ATP = glutathione + ADP + phosphate + H(+). It functions in the pathway sulfur metabolism; glutathione biosynthesis; glutathione from L-cysteine and L-glutamate: step 2/2. The polypeptide is Glutathione synthetase (gshB) (Dictyostelium discoideum (Social amoeba)).